Consider the following 214-residue polypeptide: Adenylate kinase (214 aa).

10 to 15 (GAGKGT) serves as a coordination point for ATP. Residues 30–59 (STGDMLRAAVKSGSELGKQAKDIMDAGKLV) form an NMP region. AMP-binding positions include T31, R36, 57-59 (KLV), 85-88 (GFPR), and Q92. The tract at residues 122–159 (GRRVHAPSGRVYHVKFNPPKVEGKDDVTGEELTTRKDD) is LID. ATP-binding positions include R123 and 132-133 (VY). AMP is bound by residues R156 and R167. K192 is subject to N6-acetyllysine. K200 provides a ligand contact to ATP.

Belongs to the adenylate kinase family. As to quaternary structure, monomer.

The protein localises to the cytoplasm. It carries out the reaction AMP + ATP = 2 ADP. It participates in purine metabolism; AMP biosynthesis via salvage pathway; AMP from ADP: step 1/1. Its function is as follows. Catalyzes the reversible transfer of the terminal phosphate group between ATP and AMP. Plays an important role in cellular energy homeostasis and in adenine nucleotide metabolism. In Escherichia coli O8 (strain IAI1), this protein is Adenylate kinase.